The sequence spans 298 residues: N-acetylmuramic acid 6-phosphate etherase (298 aa).

Residues 55 to 218 (IHTQVSGGGR…STGLMIKSGK (164 aa)) enclose the SIS domain. The active-site Proton donor is the glutamate 83. Glutamate 114 is an active-site residue.

The protein belongs to the GCKR-like family. MurNAc-6-P etherase subfamily. In terms of assembly, homodimer.

The catalysed reaction is N-acetyl-D-muramate 6-phosphate + H2O = N-acetyl-D-glucosamine 6-phosphate + (R)-lactate. Its pathway is amino-sugar metabolism; 1,6-anhydro-N-acetylmuramate degradation. It functions in the pathway amino-sugar metabolism; N-acetylmuramate degradation. The protein operates within cell wall biogenesis; peptidoglycan recycling. Its function is as follows. Specifically catalyzes the cleavage of the D-lactyl ether substituent of MurNAc 6-phosphate, producing GlcNAc 6-phosphate and D-lactate. Together with AnmK, is also required for the utilization of anhydro-N-acetylmuramic acid (anhMurNAc) either imported from the medium or derived from its own cell wall murein, and thus plays a role in cell wall recycling. The polypeptide is N-acetylmuramic acid 6-phosphate etherase (Escherichia coli O127:H6 (strain E2348/69 / EPEC)).